The chain runs to 240 residues: Ubiquinone biosynthesis O-methyltransferase (240 aa).

S-adenosyl-L-methionine-binding residues include Arg44, Gly64, Asp85, and Met129.

This sequence belongs to the methyltransferase superfamily. UbiG/COQ3 family.

The catalysed reaction is a 3-demethylubiquinol + S-adenosyl-L-methionine = a ubiquinol + S-adenosyl-L-homocysteine + H(+). It carries out the reaction a 3-(all-trans-polyprenyl)benzene-1,2-diol + S-adenosyl-L-methionine = a 2-methoxy-6-(all-trans-polyprenyl)phenol + S-adenosyl-L-homocysteine + H(+). It functions in the pathway cofactor biosynthesis; ubiquinone biosynthesis. O-methyltransferase that catalyzes the 2 O-methylation steps in the ubiquinone biosynthetic pathway. The polypeptide is Ubiquinone biosynthesis O-methyltransferase (Escherichia coli (strain SMS-3-5 / SECEC)).